The chain runs to 557 residues: Iron-sulfur cluster assembly SufBD family protein ABCI8, chloroplastic (557 aa).

Residues 1 to 47 form a disordered region; sequence MASLLANGISSFSPQPTSDSSKSPKGFHPKPESLKFPSPKSLNPTRP. The N-terminal 52 residues, 1-52, are a transit peptide targeting the chloroplast; that stretch reads MASLLANGISSFSPQPTSDSSKSPKGFHPKPESLKFPSPKSLNPTRPIFKLR. The segment covering 10 to 24 has biased composition (low complexity); the sequence is SSFSPQPTSDSSKSP.

The protein belongs to the iron-sulfur cluster assembly SufBD family.

The protein localises to the plastid. Its subcellular location is the chloroplast. Involved in light signaling, probably by mediating the transport and correct distribution of protoporphyrin IX, a chlorophyll precursor, in response to far-red light. In Arabidopsis thaliana (Mouse-ear cress), this protein is Iron-sulfur cluster assembly SufBD family protein ABCI8, chloroplastic (ABCI8).